Reading from the N-terminus, the 1069-residue chain is MDFSKENTQIRYLNSLLVPETGSTSIPDDTLDRHCLKTETTTENLVAALGGSGLIVLFPNSPSGLLGAHYTKTPQGSLIFDKAITTSQDLKKAYNYARLVSRIVQVRSSTLPAGVYALNGTFNGVTYIGSLSEIKDLDYNSLLSATANINDKVGNVLVGDGVAVLSLPAGSDLPYVRLGDEVPSSAGVARCSPSDRPRHYNANNKQVQVGTTDTKTNGFNIDATTPTEVTVDMQIAQIAAGKTLTVTVKLMGLTGAKVASRSETVSGNGGTFHFSTTAVFGETEITQPVVGVQVLAKTNGDPIVVDSYVGVTVHGGNMPGTLRPVTIIAYESVATGSVLTLSGISNYELIPNPELAKNIQTSYGKLNPAEMTYTKVVLSHRDELGLRSIWSIPQYRDMMSYFREVSDRSSPLKIAGAFGWGDLLSGIRKWVFPVVDTLLPAARPLTDLASGWIKNKYPEAASGRPLAASGRPMAASGTFSKRIPLASSDEIDYQSVLALTIPGTHPKLVPPTEREPNSTPDGHKITGAKTKDNTGGDVTVVKPLDWLFKLPCLRPQAADLPISLLQTLAYKQPLGRNSRIVHFTDGALFPVVAFGDNHSTSELYIAVRGDHRDLMSPDVRDSYALTGDDHKVWGATHHTYYVEGAPKKPLKFNVKTRTDLTILPVADVFWRADGSADVDVVWNDMPAVAGQSSSIALALASSLPFVPKAAYTGCLSGTNVQPVQFGNLKARAAHKIGLPLVGMTQDGGEDTRICTLDDAADHAFDSMESTVTRPESVGHQAAFQGWFYCGAADEETIEELEDFLDSIELHSKPTVEQPQTEEAMELLMELARKDPQMSKILVILGWVEGAGLIDALYNWAQLDDGGVRMRNMLRNLPHEGSKSQRRKHGPAPESRESTRMEVLRREAAAKRKKAQRISEDAMDNGFEFATIDWVLENGSRGPNPAQAKYYKATGLDPEPGLTEFLPEPTHAPENKAAKLAATIYGSPNQAPAPPEFVEEVAAVLMENNGRGPNQAQMRELRLKALTMKSGSGAAATFKPRNRRPAQEYQPRPPITSRAGRFLNISTTLS.

D28 is an a divalent metal cation binding site. The tract at residues 504–534 (THPKLVPPTEREPNSTPDGHKITGAKTKDNT) is disordered. The span at 512–534 (TEREPNSTPDGHKITGAKTKDNT) shows a compositional bias: basic and acidic residues. Residues 558 to 791 (ADLPISLLQT…AFQGWFYCGA (234 aa)) enclose the Peptidase S50 domain. S692 serves as the catalytic Nucleophile. Residue K729 is part of the active site. Disordered stretches follow at residues 876–900 (LPHE…STRM) and 1031–1069 (SGAA…TTLS).

Homotrimer. A central divalent metal stabilizes the VP2 trimer. As to quaternary structure, homodimer. Interacts (via C-terminus) with VP1 in the cytoplasm. Interacts with VP2. Post-translationally, specific enzymatic cleavages yield mature proteins. The capsid assembly seems to be regulated by polyprotein processing. The protease VP4 cleaves itself off the polyprotein, thus releasing pre-VP2 and VP3 within the infected cell. During capsid assembly, the C-terminus of pre-VP2 is further processed by VP4, giving rise to VP2, the external capsid protein and three small peptides that all stay closely associated with the capsid. In terms of processing, the N-termini of VP2 and VP3 are blocked.

It is found in the virion. The protein resides in the host cytoplasm. Capsid protein VP2 self assembles to form an icosahedral capsid with a T=13 symmetry, about 70 nm in diameter, and consisting of 260 VP2 trimers. The capsid encapsulates the genomic dsRNA. VP2 is also involved in attachment and entry into the host cell. Functionally, the precursor of VP2 plays an important role in capsid assembly. First, pre-VP2 and VP2 oligomers assemble to form a procapsid. Then, the pre-VP2 intermediates may be processed into VP2 proteins by proteolytic cleavage mediated by VP4 to obtain the mature virion. The final capsid is composed of pentamers and hexamers but VP2 has a natural tendency to assemble into all-pentameric structures. Therefore pre-VP2 may be required to allow formation of the hexameric structures. Its function is as follows. Protease VP4 is a serine protease that cleaves the polyprotein into its final products. Pre-VP2 is first partially cleaved, and may be completely processed by VP4 upon capsid maturation. In terms of biological role, capsid protein VP3 plays a key role in virion assembly by providing a scaffold for the capsid made of VP2. May self-assemble to form a T=4-like icosahedral inner-capsid composed of at least 180 trimers. Plays a role in genomic RNA packaging by recruiting VP1 into the capsid and interacting with the dsRNA genome segments to form a ribonucleoprotein complex. Additionally, the interaction of the VP3 C-terminal tail with VP1 removes the inherent structural blockade of the polymerase active site. Thus, VP3 can also function as a transcriptional activator. Structural peptide 1 is a small peptide derived from pre-VP2 C-terminus. It destabilizes and perforates cell membranes, suggesting a role during entry. Functionally, structural peptide 2 is a small peptide derived from pre-VP2 C-terminus. It is not essential for the virus viability, but viral growth is affected when missing. Its function is as follows. Structural peptide 3 is a small peptide derived from pre-VP2 C-terminus. It is not essential for the virus viability, but viral growth is affected when missing. In terms of biological role, structural peptide 4 is a small peptide derived from pre-VP2 C-terminus. It is essential for the virus viability. The chain is Structural polyprotein from Channa lucius (Forest snakehead).